A 731-amino-acid chain; its full sequence is MSWFVDLAGKAEDLLNRVDQGAATALSRKDNASNIYSKNTDYTELHQQNTDLIYQTGPKSTYISSAADNIRNQKATILAGTANVKVGSRTPVEASHPVENASVPRPSSHFVRRKKSEPDDELLFDFLNSSQKEPTGRVEIRKEKGKTPVFQSSQTSSVSSVNPSVTTIKTIEENSFGSQTHEAASNSDSSHEGQEESSKENVSSNAACPDHTPTPNDDGKSHELSNLRLENQLLRNEVQSLNQEMASLLQRSKETQEELNKARARVEKWNADHSKSDRMTRGLRAQVDDLTEAVAAKDSQLAVLKVRLQEADQLLSTRTEALEALQSEKSRIMQDQSEGNSLQNQALQTFQERLHEADATLKREQESYKQMQSEFAARLNKVEMERQNLAEAITLAERKYSDEKKRVDELQQQVKLYKLNLESSKQELIDYKQKATRILQSKEKLINSLKEGSGFEGLDSSTASSMELEELRHEKEMQREEIQKLMGQIHQLRSELQDMEAQQVNEAESAREQLQDLHDQIAGQKASKQELETELERLKQEFHYIEEDLYRTKNTLQSRIKDRDEEIQKLRNQLTNKTLSNSSQSELENRLHQLTETLIQKQTMLESLSTEKNSLVFQLERLEQQMNSASGSSSNGSSINMSGIDNGEGTRLRNVPVLFNDTETNLAGMYGKVRKAASSIDQFSIRLGIFLRRYPIARVFVIIYMALLHLWVMIVLLTYTPEMHHDQPYGK.

An N-acetylserine modification is found at serine 2. The Cytoplasmic segment spans residues 2–698 (SWFVDLAGKA…IFLRRYPIAR (697 aa)). The residue at position 89 (arginine 89) is a Dimethylated arginine. A disordered region spans residues 93–222 (EASHPVENAS…PTPNDDGKSH (130 aa)). The residue at position 116 (serine 116) is a Phosphoserine. Basic and acidic residues predominate over residues 134–146 (PTGRVEIRKEKGK). The segment covering 147–167 (TPVFQSSQTSSVSSVNPSVTT) has biased composition (low complexity). Positions 173 to 188 (ENSFGSQTHEAASNSD) are enriched in polar residues. Basic and acidic residues predominate over residues 189–199 (SSHEGQEESSK). A coiled-coil region spans residues 216–632 (NDDGKSHELS…EQQMNSASGS (417 aa)). A helical; Anchor for type IV membrane protein transmembrane segment spans residues 699–719 (VFVIIYMALLHLWVMIVLLTY). At 720–731 (TPEMHHDQPYGK) the chain is on the lumenal side.

As to quaternary structure, homodimer. Interacts with RAB1A that has been activated by GTP-binding, and possibly also with OCRL1. Interacts with isoform CASP of CUX1. Post-translationally, highly phosphorylated during mitosis. Phosphorylation is barely detectable during interphase. In terms of tissue distribution, ubiquitous. Highly expressed in seminiferous tubules and Leydig cells in testis, and detected at much lower levels in the other tissues tested. Expression is very low or not detectable in spermatozoa.

The protein localises to the golgi apparatus membrane. Functionally, involved in maintaining Golgi structure. Stimulates the formation of Golgi stacks and ribbons. Involved in intra-Golgi retrograde transport. The chain is Golgin subfamily A member 5 (GOLGA5) from Homo sapiens (Human).